A 1262-amino-acid chain; its full sequence is Isoleucine--tRNA ligase, cytoplasmic (1262 aa).

Met-1 bears the N-acetylmethionine mark. A 'HIGH' region motif is present at residues 48-58 (PFATGLPHYGH). Positions 600–604 (KMSKR) match the 'KMSKS' region motif. Lys-603 is an ATP binding site. Ser-1047 and Ser-1049 each carry phosphoserine. Thr-1058 carries the phosphothreonine modification.

The protein belongs to the class-I aminoacyl-tRNA synthetase family. In terms of assembly, part of a multisubunit complex that groups tRNA ligases for Arg (RARS1), Asp (DARS1), Gln (QARS1), Ile (IARS1), Leu (LARS1), Lys (KARS1), Met (MARS1) the bifunctional ligase for Glu and Pro (EPRS1) and the auxiliary subunits AIMP1/p43, AIMP2/p38 and EEF1E1/p18. In terms of tissue distribution, expressed in liver and muscle (at protein level).

The protein resides in the cytoplasm. It localises to the cytosol. The catalysed reaction is tRNA(Ile) + L-isoleucine + ATP = L-isoleucyl-tRNA(Ile) + AMP + diphosphate. In terms of biological role, catalyzes the specific attachment of an amino acid to its cognate tRNA in a 2 step reaction: the amino acid (AA) is first activated by ATP to form AA-AMP and then transferred to the acceptor end of the tRNA. This is Isoleucine--tRNA ligase, cytoplasmic from Homo sapiens (Human).